The sequence spans 1409 residues: CRISPR-associated endonuclease Cas9 (1409 aa).

Residue Asp-31 is the For RuvC-like nuclease domain of the active site. The Mg(2+) site is built by Asp-31, Glu-784, and Glu-788. Residues Thr-792–Leu-949 enclose the HNH Cas9-type domain. The active-site Proton acceptor for HNH nuclease domain is the His-868. Position 1011 (His-1011) interacts with Mg(2+). Basic and acidic residues predominate over residues Glu-1121–Lys-1130. Residues Glu-1121–Leu-1151 are disordered. The segment covering Ala-1137–Asn-1150 has biased composition (polar residues).

Belongs to the CRISPR-associated protein Cas9 family. Subtype II-A subfamily. In terms of assembly, monomer. Binds crRNA and tracrRNA. Mg(2+) is required as a cofactor.

Only has nuclease activity when bound to both gRNAs (crRNA plus tracrRNA). CRISPR (clustered regularly interspaced short palindromic repeat) is an adaptive immune system that provides protection against mobile genetic elements (viruses, transposable elements and conjugative plasmids). CRISPR clusters contain spacers, sequences complementary to antecedent mobile elements, and target invading nucleic acids. CRISPR clusters are transcribed and processed into CRISPR RNA (crRNA). In type II CRISPR systems correct processing of pre-crRNA requires a trans-encoded small RNA (tracrRNA), endogenous ribonuclease 3 (rnc) and Cas9. The tracrRNA serves as a guide for ribonuclease 3-aided processing of pre-crRNA. Cas9/crRNA/tracrRNA endonucleolytically cleaves linear or circular dsDNA target complementary to the spacer yielding blunt ends; Cas9 is inactive in the absence of the 2 guide RNAs (gRNA). Cas9 recognizes a 3'-G-rich protospacer adjacent motif (PAM, TGGTG in this organism) in the CRISPR repeat sequences to help distinguish self versus nonself, as targets within the bacterial CRISPR locus do not have PAMs. PAM recognition is also required for catalytic activity. When the CRISPR3/cas system consisting of cas9-cas1-cas2-csn2-CRISPR3 or just cas9-CRISPR3 is expressed in E.coli it prevents plasmids homologous to spacers 1 or 2 from transforming. This is CRISPR-associated endonuclease Cas9 from Streptococcus thermophilus.